The sequence spans 502 residues: Lysine--tRNA ligase (502 aa).

Residues glutamate 412 and glutamate 419 each coordinate Mg(2+).

It belongs to the class-II aminoacyl-tRNA synthetase family. As to quaternary structure, homodimer. The cofactor is Mg(2+).

The protein resides in the cytoplasm. It catalyses the reaction tRNA(Lys) + L-lysine + ATP = L-lysyl-tRNA(Lys) + AMP + diphosphate. This is Lysine--tRNA ligase from Histophilus somni (strain 2336) (Haemophilus somnus).